The chain runs to 380 residues: Cytochrome b (380 aa).

The next 4 membrane-spanning stretches (helical) occupy residues 34-54 (FGSL…LLAM), 78-99 (WLIR…FLHI), 114-134 (WNTG…GYVL), and 179-199 (FFAL…IHLT). Positions 84 and 98 each coordinate heme b. Residues H183 and H197 each coordinate heme b. H202 contacts a ubiquinone. 4 helical membrane-spanning segments follow: residues 227–247 (IKDI…ALFS), 289–309 (LGGV…PFLH), 321–341 (LSQT…WIGS), and 348–368 (FIII…ILFP).

Belongs to the cytochrome b family. As to quaternary structure, the cytochrome bc1 complex contains 11 subunits: 3 respiratory subunits (MT-CYB, CYC1 and UQCRFS1), 2 core proteins (UQCRC1 and UQCRC2) and 6 low-molecular weight proteins (UQCRH/QCR6, UQCRB/QCR7, UQCRQ/QCR8, UQCR10/QCR9, UQCR11/QCR10 and a cleavage product of UQCRFS1). This cytochrome bc1 complex then forms a dimer. The cofactor is heme b.

It is found in the mitochondrion inner membrane. Component of the ubiquinol-cytochrome c reductase complex (complex III or cytochrome b-c1 complex) that is part of the mitochondrial respiratory chain. The b-c1 complex mediates electron transfer from ubiquinol to cytochrome c. Contributes to the generation of a proton gradient across the mitochondrial membrane that is then used for ATP synthesis. This Coturnix japonica (Japanese quail) protein is Cytochrome b (MT-CYB).